The chain runs to 38 residues: Cytochrome b6-f complex subunit 5 (38 aa).

Residues 5 to 25 (LLLGIVLGLIPVTLAGLFVAA) traverse the membrane as a helical segment.

It belongs to the PetG family. In terms of assembly, the 4 large subunits of the cytochrome b6-f complex are cytochrome b6, subunit IV (17 kDa polypeptide, PetD), cytochrome f and the Rieske protein, while the 4 small subunits are PetG, PetL, PetM and PetN. The complex functions as a dimer.

The protein resides in the cellular thylakoid membrane. Its function is as follows. Component of the cytochrome b6-f complex, which mediates electron transfer between photosystem II (PSII) and photosystem I (PSI), cyclic electron flow around PSI, and state transitions. PetG is required for either the stability or assembly of the cytochrome b6-f complex. In Synechocystis sp. (strain ATCC 27184 / PCC 6803 / Kazusa), this protein is Cytochrome b6-f complex subunit 5.